The following is a 76-amino-acid chain: Exodeoxyribonuclease 7 small subunit (76 aa).

It belongs to the XseB family. As to quaternary structure, heterooligomer composed of large and small subunits.

The protein localises to the cytoplasm. It catalyses the reaction Exonucleolytic cleavage in either 5'- to 3'- or 3'- to 5'-direction to yield nucleoside 5'-phosphates.. Functionally, bidirectionally degrades single-stranded DNA into large acid-insoluble oligonucleotides, which are then degraded further into small acid-soluble oligonucleotides. The protein is Exodeoxyribonuclease 7 small subunit of Bacillus cereus (strain G9842).